We begin with the raw amino-acid sequence, 1377 residues long: Clustered mitochondria protein homolog (1377 aa).

Residues 1–61 (MLKSIQRNGK…GETKKKSDSE (61 aa)) are disordered. The region spanning 353 to 595 (RAEDTFSSKL…RTFPPDVNFL (243 aa)) is the Clu domain. A TPR 1 repeat occupies 519–552 (VYGSIDFGKTVLSHEKYLELLNNAGKHLKIYPHS). 2 disordered regions span residues 651–700 (NKRQ…VPKV) and 886–917 (DVLT…KSSF). The span at 655–690 (QKQDTPKEETKAIEPAAKEDSANNNKEEPAAKKGEP) shows a compositional bias: basic and acidic residues. A compositionally biased stretch (polar residues) spans 886-896 (DVLTKSGSSGK). TPR repeat units lie at residues 1022 to 1055 (AYNF…LNNV), 1148 to 1181 (ALLD…NIKY), and 1183 to 1216 (GEKS…EKET). Residues 1310–1377 (KEGGAAGESS…SKANPVASSS (68 aa)) form a disordered region. The span at 1364 to 1377 (ASSSSKANPVASSS) shows a compositional bias: low complexity.

This sequence belongs to the CLU family.

Its subcellular location is the cytoplasm. Functionally, mRNA-binding protein involved in proper cytoplasmic distribution of mitochondria. The sequence is that of Clustered mitochondria protein homolog from Culex quinquefasciatus (Southern house mosquito).